A 1323-amino-acid chain; its full sequence is uncharacterized protein (1323 aa).

Basic and acidic residues predominate over residues 1–11 (MRELQGDDSSR). Disordered regions lie at residues 1-57 (MREL…SSYY) and 79-112 (IHES…HSET). Residues 12–21 (KSPPSDSVVK) show a composition bias toward low complexity. At Ser24 the chain carries Phosphoserine. Basic and acidic residues predominate over residues 27-40 (DYEHSLKSLQDERT). Polar residues-rich tracts occupy residues 42–57 (NYPN…SSYY) and 80–105 (HESS…SSTI). 6 WD repeats span residues 271-314 (RHST…DRAI), 320-360 (GHTR…FPVN), 364-403 (DWHN…APLH), 409-449 (ENIT…EEPE), 453-494 (TTDS…KEGP), and 502-551 (GHTD…LNSM). The RWD domain maps to 671–779 (EELSWIGQKY…SYLSGNLSVD (109 aa)). A compositionally biased stretch (polar residues) spans 879–888 (SNSVADSDST). The segment at 879–904 (SNSVADSDSTNYDDENSLNRGGTSES) is disordered. The RING-type; degenerate zinc finger occupies 1265 to 1309 (CTFCCLSIHGLCIVCGLCLHVMHEDCYKEWFSNGDSISQSCSSGC).

The protein belongs to the WD repeat WDR59 family.

Its function is as follows. May be involved in telomere capping. This is an uncharacterized protein from Schizosaccharomyces pombe (strain 972 / ATCC 24843) (Fission yeast).